A 201-amino-acid chain; its full sequence is Potassium-transporting ATPase KdpC subunit (201 aa).

The helical transmembrane segment at 12-34 (LLALTMITGLAYPLAVTGLATVL) threads the bilayer. Residues 73–102 (TVAPDPADSSKTVSAPYNAANSGGSNLGPT) are disordered. The span at 81–101 (SSKTVSAPYNAANSGGSNLGP) shows a compositional bias: polar residues.

Belongs to the KdpC family. In terms of assembly, the system is composed of three essential subunits: KdpA, KdpB and KdpC.

The protein resides in the cell inner membrane. Part of the high-affinity ATP-driven potassium transport (or Kdp) system, which catalyzes the hydrolysis of ATP coupled with the electrogenic transport of potassium into the cytoplasm. This subunit acts as a catalytic chaperone that increases the ATP-binding affinity of the ATP-hydrolyzing subunit KdpB by the formation of a transient KdpB/KdpC/ATP ternary complex. In Rhodopseudomonas palustris (strain ATCC BAA-98 / CGA009), this protein is Potassium-transporting ATPase KdpC subunit.